The primary structure comprises 341 residues: Glucokinase (341 aa).

18 to 23 (GDIGGT) contacts ATP.

Belongs to the bacterial glucokinase family.

It is found in the cytoplasm. The catalysed reaction is D-glucose + ATP = D-glucose 6-phosphate + ADP + H(+). The polypeptide is Glucokinase (Rhizobium leguminosarum bv. trifolii (strain WSM2304)).